The chain runs to 551 residues: HTH-type transcriptional regulator SgrR (551 aa).

The HTH marR-type domain maps to 1–116; sequence MPSARLQQQF…LVSHLGRSFR (116 aa). The H-T-H motif DNA-binding region spans 26–49; that stretch reads LNELAALLSCSRRHMRTLLNTMQD. Residues 163–492 are solute-binding; the sequence is ELEADIAHHW…IDWQADAARW (330 aa).

Its function is as follows. Activates the small RNA gene sgrS under glucose-phosphate stress conditions as well as yfdZ. Represses its own transcription under both stress and non-stress conditions. Might act as a sensor of the intracellular accumulation of phosphoglucose by binding these molecules in its C-terminal solute-binding domain. In Shigella flexneri serotype 5b (strain 8401), this protein is HTH-type transcriptional regulator SgrR.